The sequence spans 121 residues: UPF0102 protein VP0448 (121 aa).

This sequence belongs to the UPF0102 family.

This chain is UPF0102 protein VP0448, found in Vibrio parahaemolyticus serotype O3:K6 (strain RIMD 2210633).